The chain runs to 413 residues: Glucose-1-phosphate adenylyltransferase (413 aa).

Alpha-D-glucose 1-phosphate contacts are provided by residues Gly169, 184–185, and Ser201; that span reads EK.

Belongs to the bacterial/plant glucose-1-phosphate adenylyltransferase family. Homotetramer.

The catalysed reaction is alpha-D-glucose 1-phosphate + ATP + H(+) = ADP-alpha-D-glucose + diphosphate. It functions in the pathway glycan biosynthesis; glycogen biosynthesis. Its function is as follows. Involved in the biosynthesis of ADP-glucose, a building block required for the elongation reactions to produce glycogen. Catalyzes the reaction between ATP and alpha-D-glucose 1-phosphate (G1P) to produce pyrophosphate and ADP-Glc. The sequence is that of Glucose-1-phosphate adenylyltransferase from Trichlorobacter lovleyi (strain ATCC BAA-1151 / DSM 17278 / SZ) (Geobacter lovleyi).